The primary structure comprises 547 residues: Alpha-humulene/(-)-(E)-beta-caryophyllene synthase (547 aa).

(2E,6E)-farnesyl diphosphate is bound by residues arginine 262, aspartate 299, aspartate 303, arginine 442, and aspartate 445. Mg(2+) contacts are provided by aspartate 299 and aspartate 303. The short motif at 299-303 is the DDXXD motif element; that stretch reads DDMYD. Aspartate 445, aspartate 446, serine 449, and glutamate 453 together coordinate Mg(2+).

Belongs to the terpene synthase family. Tpsa subfamily. As to quaternary structure, monomer. Mg(2+) is required as a cofactor. It depends on Mn(2+) as a cofactor. Expressed exclusively in flowers. Expressed in the flower stigmata and also detected in the mesocarp cell layers of the silique wall.

It localises to the cytoplasm. It carries out the reaction (2E,6E)-farnesyl diphosphate = (-)-(E)-beta-caryophyllene + diphosphate. The enzyme catalyses (2E,6E)-farnesyl diphosphate = alpha-copaene + diphosphate. The catalysed reaction is (2E,6E)-farnesyl diphosphate = alpha-humulene + diphosphate. It catalyses the reaction (2E,6E)-farnesyl diphosphate = (1S,2S,4R)-beta-elemene + diphosphate. It participates in secondary metabolite biosynthesis; terpenoid biosynthesis. Functionally, involved in sesquiterpene (C15) biosynthesis. The major products are beta-caryophyllene and alpha-humulene. Does not convert geranyl diphosphate (GPP) to any monoterpenes. This Arabidopsis thaliana (Mouse-ear cress) protein is Alpha-humulene/(-)-(E)-beta-caryophyllene synthase.